The primary structure comprises 224 residues: Ribosomal RNA small subunit methyltransferase I (224 aa).

This sequence belongs to the methyltransferase superfamily. RsmI family.

It localises to the cytoplasm. It catalyses the reaction cytidine(1402) in 16S rRNA + S-adenosyl-L-methionine = 2'-O-methylcytidine(1402) in 16S rRNA + S-adenosyl-L-homocysteine + H(+). Its function is as follows. Catalyzes the 2'-O-methylation of the ribose of cytidine 1402 (C1402) in 16S rRNA. This chain is Ribosomal RNA small subunit methyltransferase I, found in Borrelia garinii subsp. bavariensis (strain ATCC BAA-2496 / DSM 23469 / PBi) (Borreliella bavariensis).